The chain runs to 500 residues: Glycerol kinase (500 aa).

Residue threonine 13 coordinates ADP. The ATP site is built by threonine 13, threonine 14, and serine 15. Threonine 13 serves as a coordination point for sn-glycerol 3-phosphate. Position 17 (arginine 17) interacts with ADP. Sn-glycerol 3-phosphate is bound by residues arginine 83, glutamate 84, tyrosine 135, and aspartate 244. Positions 83, 84, 135, 244, and 245 each coordinate glycerol. Residues threonine 266, glycine 309, glycine 410, and asparagine 414 each contribute to the ADP site. Threonine 266, glycine 309, and glycine 410 together coordinate ATP.

The protein belongs to the FGGY kinase family.

It catalyses the reaction glycerol + ATP = sn-glycerol 3-phosphate + ADP + H(+). It participates in polyol metabolism; glycerol degradation via glycerol kinase pathway; sn-glycerol 3-phosphate from glycerol: step 1/1. With respect to regulation, inhibited by fructose 1,6-bisphosphate (FBP). Key enzyme in the regulation of glycerol uptake and metabolism. Catalyzes the phosphorylation of glycerol to yield sn-glycerol 3-phosphate. In Chromobacterium violaceum (strain ATCC 12472 / DSM 30191 / JCM 1249 / CCUG 213 / NBRC 12614 / NCIMB 9131 / NCTC 9757 / MK), this protein is Glycerol kinase.